We begin with the raw amino-acid sequence, 299 residues long: Acetaldehyde dehydrogenase (299 aa).

The active-site Acyl-thioester intermediate is the C126. Residues 157–165 and N267 each bind NAD(+); that span reads SAGPGTRQN.

It belongs to the acetaldehyde dehydrogenase family.

It catalyses the reaction acetaldehyde + NAD(+) + CoA = acetyl-CoA + NADH + H(+). The sequence is that of Acetaldehyde dehydrogenase (mhpF) from Carboxydothermus hydrogenoformans (strain ATCC BAA-161 / DSM 6008 / Z-2901).